Consider the following 360-residue polypeptide: Nucleoporin SEH1-A (360 aa).

WD repeat units lie at residues 10-49, 55-96, 111-152, 160-210, 217-258, and 276-315; these read DHKD…NWHC, THSG…SNDK, DSRT…NLSQ, SCKL…RKYA, SVSD…KELS, and NHNS…NWKC.

This sequence belongs to the WD repeat SEC13 family. In terms of assembly, component of the Nup107-160 subcomplex of the nuclear pore complex (NPC). The Nup107-160 subcomplex includes NUP160, NUP133, NUP107, NUP98, NUP85, NUP43, NUP37, SEH1 and SEC13. Component of the GATOR2 subcomplex, composed of MIOS, SEC13, SEH1L, WDR24 and WDR59. The GATOR2 complex interacts with CASTOR1 and CASTOR2; the interaction is negatively regulated by arginine. The GATOR2 complex interacts with SESN1, SESN2 and SESN3; the interaction is negatively regulated by amino acids.

The protein resides in the chromosome. It localises to the centromere. The protein localises to the kinetochore. It is found in the nucleus. Its subcellular location is the nuclear pore complex. The protein resides in the lysosome membrane. The GATOR2 complex is negatively regulated by the upstream amino acid sensors CASTOR1 and SESN2, which sequester the GATOR2 complex in absence of amino acids. In the presence of abundant amino acids, GATOR2 is released from CASTOR1 and SESN2 and activated. In terms of biological role, component of the Nup107-160 subcomplex of the nuclear pore complex (NPC). The Nup107-160 subcomplex is required for the assembly of a functional NPC. The Nup107-160 subcomplex is also required for normal kinetochore microtubule attachment, mitotic progression and chromosome segregation. This subunit plays a role in recruitment of the Nup107-160 subcomplex to the kinetochore. Its function is as follows. As a component of the GATOR2 complex, functions as an activator of the amino acid-sensing branch of the mTORC1 signaling pathway. The GATOR2 complex indirectly activates mTORC1 through the inhibition of the GATOR1 subcomplex. GATOR2 probably acts as an E3 ubiquitin-protein ligase toward GATOR1. In the presence of abundant amino acids, the GATOR2 complex mediates ubiquitination of the NPRL2 core component of the GATOR1 complex, leading to GATOR1 inactivation. In the absence of amino acids, GATOR2 is inhibited, activating the GATOR1 complex. The protein is Nucleoporin SEH1-A (seh1l-a) of Xenopus laevis (African clawed frog).